Here is a 271-residue protein sequence, read N- to C-terminus: Formamidopyrimidine-DNA glycosylase (271 aa).

Pro2 (schiff-base intermediate with DNA) is an active-site residue. Catalysis depends on Glu3, which acts as the Proton donor. The active-site Proton donor; for beta-elimination activity is the Lys57. Positions 90, 109, and 151 each coordinate DNA. The segment at 236-270 (HVYGRGGETCTQCGNLLSEIRLGQRTTVFCGICQT) adopts an FPG-type zinc-finger fold. Catalysis depends on Arg260, which acts as the Proton donor; for delta-elimination activity.

Belongs to the FPG family. As to quaternary structure, monomer. Zn(2+) serves as cofactor.

It carries out the reaction Hydrolysis of DNA containing ring-opened 7-methylguanine residues, releasing 2,6-diamino-4-hydroxy-5-(N-methyl)formamidopyrimidine.. The enzyme catalyses 2'-deoxyribonucleotide-(2'-deoxyribose 5'-phosphate)-2'-deoxyribonucleotide-DNA = a 3'-end 2'-deoxyribonucleotide-(2,3-dehydro-2,3-deoxyribose 5'-phosphate)-DNA + a 5'-end 5'-phospho-2'-deoxyribonucleoside-DNA + H(+). Functionally, involved in base excision repair of DNA damaged by oxidation or by mutagenic agents. Acts as a DNA glycosylase that recognizes and removes damaged bases. Has a preference for oxidized purines, such as 7,8-dihydro-8-oxoguanine (8-oxoG). Has AP (apurinic/apyrimidinic) lyase activity and introduces nicks in the DNA strand. Cleaves the DNA backbone by beta-delta elimination to generate a single-strand break at the site of the removed base with both 3'- and 5'-phosphates. The chain is Formamidopyrimidine-DNA glycosylase from Shewanella sp. (strain MR-4).